Consider the following 825-residue polypeptide: Thioredoxin domain-containing protein 16 (825 aa).

A signal peptide spans 1–27; the sequence is MFSGFNVFRVGISFVIMCIFYMPTVNS. One can recognise a Thioredoxin domain in the interval 392 to 495; the sequence is LTVELTEETF…EDLLKFIQLN (104 aa). An intrachain disulfide couples cysteine 449 to cysteine 456. A glycan (N-linked (GlcNAc...) asparagine) is linked at asparagine 460. The tract at residues 762-787 is disordered; that stretch reads RKVPKCMKETDVQENDKEQHEDKSAV. The segment covering 767 to 787 has biased composition (basic and acidic residues); the sequence is CMKETDVQENDKEQHEDKSAV. Positions 816–819 match the Mediates endoplasmic reticulum retention motif; that stretch reads DKEL.

In terms of assembly, interacts with FOXRED2. Post-translationally, glycosylated.

The protein localises to the secreted. The protein resides in the endoplasmic reticulum lumen. In Homo sapiens (Human), this protein is Thioredoxin domain-containing protein 16.